Reading from the N-terminus, the 216-residue chain is A-type ATP synthase subunit D (216 aa).

The protein belongs to the V-ATPase D subunit family. In terms of assembly, has multiple subunits with at least A(3), B(3), C, D, E, F, H, I and proteolipid K(x). In terms of processing, the N-terminus is blocked.

It localises to the cell membrane. Component of the A-type ATP synthase that produces ATP from ADP in the presence of a proton gradient across the membrane. In Sulfurisphaera tokodaii (strain DSM 16993 / JCM 10545 / NBRC 100140 / 7) (Sulfolobus tokodaii), this protein is A-type ATP synthase subunit D.